A 271-amino-acid chain; its full sequence is Enolase-phosphatase E1 (271 aa).

Mg(2+) contacts are provided by D18 and E20. Residues 144 to 145 (SS) and K194 each bind substrate. D221 is a binding site for Mg(2+).

The protein belongs to the HAD-like hydrolase superfamily. MasA/MtnC family. In terms of assembly, monomer. Mg(2+) serves as cofactor.

The protein resides in the cytoplasm. The protein localises to the nucleus. It carries out the reaction 5-methylsulfanyl-2,3-dioxopentyl phosphate + H2O = 1,2-dihydroxy-5-(methylsulfanyl)pent-1-en-3-one + phosphate. The protein operates within amino-acid biosynthesis; L-methionine biosynthesis via salvage pathway; L-methionine from S-methyl-5-thio-alpha-D-ribose 1-phosphate: step 3/6. Its pathway is amino-acid biosynthesis; L-methionine biosynthesis via salvage pathway; L-methionine from S-methyl-5-thio-alpha-D-ribose 1-phosphate: step 4/6. In terms of biological role, bifunctional enzyme that catalyzes the enolization of 2,3-diketo-5-methylthiopentyl-1-phosphate (DK-MTP-1-P) into the intermediate 2-hydroxy-3-keto-5-methylthiopentenyl-1-phosphate (HK-MTPenyl-1-P), which is then dephosphorylated to form the acireductone 1,2-dihydroxy-3-keto-5-methylthiopentene (DHK-MTPene). This Candida albicans (strain WO-1) (Yeast) protein is Enolase-phosphatase E1.